The sequence spans 417 residues: Autophagy-related protein 18 (417 aa).

WD repeat units lie at residues 1–36 (MSMN…KSYE), 76–114 (ELTF…LVYT), 185–225 (AHKS…KLYQ), and 230–269 (SMPS…GLSK). The short motif at 226–230 (FRRGS) is the L/FRRG motif element. A disordered region spans residues 267 to 300 (LSKTSSPSRKLESSRGSGDESAVESASSEMSSRK). Positions 285-296 (DESAVESASSEM) are enriched in low complexity. 2 WD repeats span residues 300 to 346 (KHNG…AWIK) and 355 to 395 (GGSG…GGEG).

This sequence belongs to the WD repeat PROPPIN family. Component of the PI(3,5)P2 regulatory complex.

It localises to the preautophagosomal structure membrane. It is found in the vacuole membrane. The protein localises to the endosome membrane. Functionally, the PI(3,5)P2 regulatory complex regulates both the synthesis and turnover of phosphatidylinositol 3,5-bisphosphate (PtdIns(3,5)P2). Necessary for proper vacuole morphology. Plays an important role in osmotically-induced vacuole fragmentation. Required for cytoplasm to vacuole transport (Cvt) vesicle formation, pexophagy and starvation-induced autophagy. Involved in correct ATG9 trafficking to the pre-autophagosomal structure. Might also be involved in premeiotic DNA replication. The sequence is that of Autophagy-related protein 18 (ATG18) from Coccidioides immitis (strain RS) (Valley fever fungus).